A 98-amino-acid polypeptide reads, in one-letter code: Small ribosomal subunit protein bS20 (98 aa).

This sequence belongs to the bacterial ribosomal protein bS20 family.

Its function is as follows. Binds directly to 16S ribosomal RNA. The sequence is that of Small ribosomal subunit protein bS20 from Synechococcus elongatus (strain ATCC 33912 / PCC 7942 / FACHB-805) (Anacystis nidulans R2).